We begin with the raw amino-acid sequence, 602 residues long: Solute carrier organic anion transporter family member 1C1 (602 aa).

Topologically, residues 1-43 are cytoplasmic; that stretch reads MDTSSKENIQLFCKTSVQPVGRPSFKTEYPSSEEKQPCCGELK. A helical transmembrane segment spans residues 44-63; the sequence is VFLGALSFVYFAKALAEGYL. Residues 64–82 are Extracellular-facing; sequence KSTITQIERRFDIPSSLVG. Residues 83–103 traverse the membrane as a helical segment; sequence VIDGSFEIGNLLVITFVSYFG. The Cytoplasmic portion of the chain corresponds to 104–109; that stretch reads AKLHRP. Residues 110–134 form a helical membrane-spanning segment; sequence KIIGAGCLIMGVGTLLIAMPQFFME. Residues 135-139 lie on the Extracellular side of the membrane; that stretch reads QYKYE. Residues 140–156 form a helical membrane-spanning segment; that stretch reads IYSPSSNSTLSISPCLL. Over 157–238 the chain is Cytoplasmic; it reads ESSSQLPVSV…ARDFLPSLKY (82 aa). A disordered region spans residues 190–216; that stretch reads PRSQSREDSNSSSEKSKFIRDDHTDYQ. Residues 193-214 show a composition bias toward basic and acidic residues; it reads QSREDSNSSSEKSKFIRDDHTD. Residues 239–260 traverse the membrane as a helical segment; the sequence is LFGNPVYFLYLCTSTVQFNSLF. Residues 261 to 280 are Extracellular-facing; it reads GMVTYKPKYIEQQYGQSSSR. The helical transmembrane segment at 281–304 threads the bilayer; that stretch reads ANFVIGLINIPAVALGIFSGGIAM. The Cytoplasmic portion of the chain corresponds to 305 to 308; that stretch reads KKFR. Residues 309 to 332 traverse the membrane as a helical segment; it reads ISVCGAAKLYLGSSVFGYLLFLSL. Residues 333 to 444 are Extracellular-facing; that stretch reads FALGCENSDV…NGCPQMFLYF (112 aa). Positions 360–415 constitute a Kazal-like domain; the sequence is RALFSDCNPRCKCSETKWEPMCGENGITYVSACPAGCQTSNRSGKNIIFYNCTCVG. Disulfide bonds link cysteine 366–cysteine 396, cysteine 372–cysteine 392, and cysteine 381–cysteine 413. Asparagine 400, asparagine 410, and asparagine 423 each carry an N-linked (GlcNAc...) asparagine glycan. Residues 445 to 467 traverse the membrane as a helical segment; the sequence is LVISVITSYTLSLGGIPGYILLL. Over 468–476 the chain is Cytoplasmic; that stretch reads RCIKPQLKS. Residues 477-502 form a helical membrane-spanning segment; that stretch reads FALGIYTLSIRVLAGIPAPVYFGVLI. The Extracellular portion of the chain corresponds to 503-536; it reads DTSCLKWGFKRCGSRGSCRLYDSNVFRHIYLGLT. Residues 537–554 form a helical membrane-spanning segment; it reads VILGTVSIFLSIAVLFIL. The Cytoplasmic portion of the chain corresponds to 555–602; sequence KKNYVSKHRNFITKRERTMVSTRFQKENCTTSDHLLQPKYWPGKETQL.

Belongs to the organo anion transporter (TC 2.A.60) family.

It localises to the cell membrane. It carries out the reaction 3,3',5'-triiodo-L-thyronine(out) = 3,3',5'-triiodo-L-thyronine(in). The catalysed reaction is L-thyroxine(out) = L-thyroxine(in). The enzyme catalyses L-thyroxine sulfate(out) = L-thyroxine sulfate(in). Functionally, mediates the Na(+)-independent high affinity transport of organic anions such as the thyroid hormones L-thyroxine (T4), L-thyroxine sulfate (T4S), and 3,3',5'-triiodo-L-thyronine (reverse T3, rT3) at the plasma membrane. Regulates T4 levels in different brain regions by transporting T4, and also by serving as an export pump for T4S, which is a source of T4 after hydrolysis by local sulfatases. Increases the access of these substrates to the intracellular sites where they are metabolized by the deiodinases. Other potential substrates, such as triiodothyronine (T3), 17-beta-glucuronosyl estradiol (17beta-estradiol 17-O-(beta-D-glucuronate)), estrone-3-sulfate (E1S) and sulfobromophthalein (BSP) are transported with much lower efficiency. Transports T4 and E1S in a pH-insensitive manner. Facilitates the transport of thyroid hormones across the blood-brain barrier and into glia and neuronal cells in the brain. The sequence is that of Solute carrier organic anion transporter family member 1C1 (SLCO1C1) from Macaca fascicularis (Crab-eating macaque).